A 340-amino-acid chain; its full sequence is Diacylglycerol acyltransferase/mycolyltransferase Ag85C (340 aa).

Residues 1-45 (MTFFEQVRRLRSAATTLPRRLAIAAMGAVLVYGLVGTFGGPATAG) form the signal peptide. Substrate is bound at residue 86–87 (LR). The interval 102-112 (FEEYYQSGLSV) is fibronectin-binding. Substrate-binding residues include serine 170 and asparagine 198. The active-site Nucleophile is serine 170. The active site involves glutamate 274. Substrate-binding positions include 276 to 279 (LTLR) and 306 to 308 (HSW). Histidine 306 is a catalytic residue.

This sequence belongs to the mycobacterial A85 antigen family. In terms of assembly, homodimer.

Its subcellular location is the secreted. The enzyme catalyses an acyl-CoA + a 1,2-diacyl-sn-glycerol = a triacyl-sn-glycerol + CoA. The catalysed reaction is 2 alpha,alpha'-trehalose 6-mycolate = alpha,alpha'-trehalose 6,6'-bismycolate + alpha,alpha-trehalose. Its function is as follows. The antigen 85 proteins (FbpA, FbpB, FbpC) are responsible for the high affinity of mycobacteria to fibronectin, a large adhesive glycoprotein, which facilitates the attachment of M.tuberculosis to murine alveolar macrophages (AMs). They also help to maintain the integrity of the cell wall by catalyzing the transfer of mycolic acids to cell wall arabinogalactan and through the synthesis of alpha,alpha-trehalose dimycolate (TDM, cord factor). They catalyze the transfer of a mycoloyl residue from one molecule of alpha,alpha-trehalose monomycolate (TMM) to another TMM, leading to the formation of TDM. This chain is Diacylglycerol acyltransferase/mycolyltransferase Ag85C (fbpC), found in Mycobacterium bovis (strain ATCC BAA-935 / AF2122/97).